The following is a 138-amino-acid chain: Outer membrane protein assembly factor BamE (138 aa).

The N-terminal stretch at Met1–Leu42 is a signal peptide.

This sequence belongs to the BamE family. Part of the Bam complex.

Its subcellular location is the cell outer membrane. Its function is as follows. Part of the outer membrane protein assembly complex, which is involved in assembly and insertion of beta-barrel proteins into the outer membrane. The protein is Outer membrane protein assembly factor BamE of Psychrobacter arcticus (strain DSM 17307 / VKM B-2377 / 273-4).